The primary structure comprises 419 residues: 3-isopropylmalate dehydratase large subunit (419 aa).

[4Fe-4S] cluster is bound by residues C300, C360, and C363.

The protein belongs to the aconitase/IPM isomerase family. LeuC type 2 subfamily. As to quaternary structure, heterodimer of LeuC and LeuD. It depends on [4Fe-4S] cluster as a cofactor.

The enzyme catalyses (2R,3S)-3-isopropylmalate = (2S)-2-isopropylmalate. The protein operates within amino-acid biosynthesis; L-leucine biosynthesis; L-leucine from 3-methyl-2-oxobutanoate: step 2/4. Catalyzes the isomerization between 2-isopropylmalate and 3-isopropylmalate, via the formation of 2-isopropylmaleate. This chain is 3-isopropylmalate dehydratase large subunit, found in Nitratidesulfovibrio vulgaris (strain ATCC 29579 / DSM 644 / CCUG 34227 / NCIMB 8303 / VKM B-1760 / Hildenborough) (Desulfovibrio vulgaris).